The sequence spans 346 residues: Very-long-chain 3-oxoacyl-CoA reductase (346 aa).

Residues threonine 26–leucine 46 form a helical membrane-spanning segment. 8 residues coordinate NADP(+): isoleucine 71, aspartate 126, aspartate 134, asparagine 153, tyrosine 220, lysine 224, isoleucine 253, and serine 255. The Proton donor role is filled by tyrosine 220. The active-site Lowers pKa of active site Tyr is the lysine 224.

It belongs to the short-chain dehydrogenases/reductases (SDR) family.

Its subcellular location is the endoplasmic reticulum membrane. It carries out the reaction a very-long-chain (3R)-3-hydroxyacyl-CoA + NADP(+) = a very-long-chain 3-oxoacyl-CoA + NADPH + H(+). Its pathway is lipid metabolism; fatty acid biosynthesis. Its function is as follows. Component of the microsomal membrane bound fatty acid elongation system, which produces the 26-carbon very long-chain fatty acids (VLCFA) from palmitate. Catalyzes the reduction of the 3-ketoacyl-CoA intermediate that is formed in each cycle of fatty acid elongation. VLCFAs serve as precursors for ceramide and sphingolipids. This is Very-long-chain 3-oxoacyl-CoA reductase from Emericella nidulans (strain FGSC A4 / ATCC 38163 / CBS 112.46 / NRRL 194 / M139) (Aspergillus nidulans).